A 958-amino-acid chain; its full sequence is Glycine dehydrogenase (decarboxylating) (958 aa).

Lysine 705 carries the post-translational modification N6-(pyridoxal phosphate)lysine.

It belongs to the GcvP family. The glycine cleavage system is composed of four proteins: P, T, L and H. Pyridoxal 5'-phosphate serves as cofactor.

It carries out the reaction N(6)-[(R)-lipoyl]-L-lysyl-[glycine-cleavage complex H protein] + glycine + H(+) = N(6)-[(R)-S(8)-aminomethyldihydrolipoyl]-L-lysyl-[glycine-cleavage complex H protein] + CO2. The glycine cleavage system catalyzes the degradation of glycine. The P protein binds the alpha-amino group of glycine through its pyridoxal phosphate cofactor; CO(2) is released and the remaining methylamine moiety is then transferred to the lipoamide cofactor of the H protein. The sequence is that of Glycine dehydrogenase (decarboxylating) from Synechococcus sp. (strain CC9902).